Consider the following 465-residue polypeptide: MNNSTNSSNNVALTSPYKTFEVVFIVLVAGSLSLVTIIGNILVMVSIKVNRHLQTVNNYFLFSLACADLIIGVFSMNLYTLYTVIGYWPLGPVVCDLWLALDYVVSNASVMNLLIISFDRYFCVTKPLTYPVKRTTKMAGMMIAAAWVLSFILWAPAILFWQFIVGVRTVEDGECYIQFFSNAAVTFGTAIAAFYLPVIIMTVLYWHISRASKSRIKKDKKEPVANQDPVSPSLVQGRIVKPNNNNMPGSDDGLEHNKIQNGKTPRDAVTENCVQGEEKESSNDSTSVSAVASNMRDDEITQDENTVSTSVGHSKDENSKQTCIKIVTKTPKGDQCTPTNTTVELVGSSGQNGDEKQNIVARKIVKMTKQPAKKKPPPSREKKVTRTILAILLAFIITWAPYNVMVLINTFCAPCIPNTVWTIGYWLCYINSTINPACYALCNATFKKTFKHLLMCHYKNIGATR.

Residues 1-21 (MNNSTNSSNNVALTSPYKTFE) are Extracellular-facing. Asparagine 2, asparagine 3, and asparagine 6 each carry an N-linked (GlcNAc...) asparagine glycan. The chain crosses the membrane as a helical span at residues 22–44 (VVFIVLVAGSLSLVTIIGNILVM). The Cytoplasmic segment spans residues 45–58 (VSIKVNRHLQTVNN). A helical membrane pass occupies residues 59-79 (YFLFSLACADLIIGVFSMNLY). Topologically, residues 80–96 (TLYTVIGYWPLGPVVCD) are extracellular. A disulfide bridge connects residues cysteine 95 and cysteine 175. A helical transmembrane segment spans residues 97–118 (LWLALDYVVSNASVMNLLIISF). The short motif at 119 to 121 (DRY) is the Important for signaling element. The Cytoplasmic portion of the chain corresponds to 119–138 (DRYFCVTKPLTYPVKRTTKM). The chain crosses the membrane as a helical span at residues 139-161 (AGMMIAAAWVLSFILWAPAILFW). Residues 162-183 (QFIVGVRTVEDGECYIQFFSNA) are Extracellular-facing. The chain crosses the membrane as a helical span at residues 184 to 208 (AVTFGTAIAAFYLPVIIMTVLYWHI). Topologically, residues 209 to 386 (SRASKSRIKK…PPSREKKVTR (178 aa)) are cytoplasmic. Residues 217–319 (KKDKKEPVAN…SVGHSKDENS (103 aa)) are disordered. A Phosphoserine modification is found at serine 231. The segment covering 253-269 (GLEHNKIQNGKTPRDAV) has biased composition (basic and acidic residues). Composition is skewed to polar residues over residues 283-292 (NDSTSVSAVA) and 303-312 (DENTVSTSVG). A helical transmembrane segment spans residues 387 to 409 (TILAILLAFIITWAPYNVMVLIN). Residues 410–417 (TFCAPCIP) lie on the Extracellular side of the membrane. A disulfide bridge connects residues cysteine 412 and cysteine 415. The chain crosses the membrane as a helical span at residues 418–441 (NTVWTIGYWLCYINSTINPACYAL). The Important for signaling motif lies at 435-439 (NPACY). The Cytoplasmic portion of the chain corresponds to 442 to 465 (CNATFKKTFKHLLMCHYKNIGATR). 3 positions are modified to phosphothreonine: threonine 445, threonine 449, and threonine 464.

This sequence belongs to the G-protein coupled receptor 1 family. Muscarinic acetylcholine receptor subfamily. CHRM2 sub-subfamily. Interacts with ARRB1 and ARRB2. Interacts with RACK1; the interaction regulates CHRM2 internalization. Phosphorylated in response to agonist treatment.

The protein localises to the cell membrane. Its subcellular location is the postsynaptic cell membrane. Functionally, the muscarinic acetylcholine receptor mediates various cellular responses, including inhibition of adenylate cyclase, breakdown of phosphoinositides and modulation of potassium channels through the action of G proteins. Primary transducing effect is adenylate cyclase inhibition. Signaling promotes phospholipase C activity, leading to the release of inositol trisphosphate (IP3); this then triggers calcium ion release into the cytosol. This is Muscarinic acetylcholine receptor M2 (CHRM2) from Bos taurus (Bovine).